Reading from the N-terminus, the 173-residue chain is NADH-ubiquinone oxidoreductase chain 6 (173 aa).

5 helical membrane passes run methionine 1–serine 21, tyrosine 27–glycine 47, valine 48–valine 68, valine 87–phenylalanine 107, and tyrosine 139–leucine 159.

It belongs to the complex I subunit 6 family.

It is found in the mitochondrion membrane. The enzyme catalyses a ubiquinone + NADH + 5 H(+)(in) = a ubiquinol + NAD(+) + 4 H(+)(out). Functionally, core subunit of the mitochondrial membrane respiratory chain NADH dehydrogenase (Complex I) that is believed to belong to the minimal assembly required for catalysis. Complex I functions in the transfer of electrons from NADH to the respiratory chain. The immediate electron acceptor for the enzyme is believed to be ubiquinone. The polypeptide is NADH-ubiquinone oxidoreductase chain 6 (MT-ND6) (Coturnix japonica (Japanese quail)).